Reading from the N-terminus, the 238-residue chain is Type III pantothenate kinase (238 aa).

Position 7 to 14 (7 to 14 (DAGNSGLK)) interacts with ATP. Residues Y88 and 95–98 (GVDR) each bind substrate. D97 acts as the Proton acceptor in catalysis. A K(+)-binding site is contributed by D117. T120 contacts ATP. T172 contributes to the substrate binding site.

It belongs to the type III pantothenate kinase family. As to quaternary structure, homodimer. NH4(+) serves as cofactor. It depends on K(+) as a cofactor.

It localises to the cytoplasm. It carries out the reaction (R)-pantothenate + ATP = (R)-4'-phosphopantothenate + ADP + H(+). It functions in the pathway cofactor biosynthesis; coenzyme A biosynthesis; CoA from (R)-pantothenate: step 1/5. Its function is as follows. Catalyzes the phosphorylation of pantothenate (Pan), the first step in CoA biosynthesis. The chain is Type III pantothenate kinase from Hahella chejuensis (strain KCTC 2396).